The chain runs to 70 residues: Small ribosomal subunit protein bS21 (70 aa).

This sequence belongs to the bacterial ribosomal protein bS21 family.

This Campylobacter jejuni subsp. jejuni serotype O:23/36 (strain 81-176) protein is Small ribosomal subunit protein bS21.